We begin with the raw amino-acid sequence, 808 residues long: Protein NLP5 (808 aa).

A compositionally biased stretch (polar residues) spans 56–68 (PTQDTSNSLSQMY). Residues 56-83 (PTQDTSNSLSQMYGQDCPERSSLEDQNQ) are disordered. Positions 536–617 (NRVTEKKRTK…IDSVEGVSGH (82 aa)) constitute an RWP-RK domain. A disordered region spans residues 660–680 (SPGSSCSHSSSCSSETQVIKE). The segment covering 663–673 (SSCSHSSSCSS) has biased composition (low complexity). The region spanning 710 to 793 (FLRVKVSYEE…QTIKLLLQLS (84 aa)) is the PB1 domain.

It is found in the nucleus. In terms of biological role, probable transcription factor. The sequence is that of Protein NLP5 (NLP5) from Arabidopsis thaliana (Mouse-ear cress).